A 1673-amino-acid chain; its full sequence is MPALRPALLWALLALWLCWAAPAHALQCRDGYEPCVNKGMCVTYHSGTGYCKCPEGFLGEYCQHRDPCEKNRCQNGGTCVAQAMLGKATCRCASGFTGEDCQYSTPHPCFVSRPCLNGGTCHMLSRDTYECTCQVGFTGKECQWTDACLSHLCANGSTCTTVANQFSCKCLTGFTGQKCETDVNECDIPGHCQHGGTCLNLPGSYQCQCLQGFTGQYCDRLYVPCAHSPCVNGGTCRQTGDFTFECNCLPVPDSTSSATNVSMVVSAGHWSSEKAEMNILEINETLRPQLPENKQQLRNLKEKCFLTQLAGFLANRQKKYKYEECKDLIKFMLRNERQFKEEKLAEQLKQAEELRQYKVLVHSQERELTQLKEKLREGRDASRSLNEHLQALLTPDEPDKSQGQDLQEQLAEGCRLAQHLVQKLSPENDEDEDEDVQVEEDEKVLESSAPREVQKTEESKVPEDSLEECAITCSNSHGPCDSNQPHKNIKITFEEDEVNSTLVVDRESSHDECQDALNILPVPGPTSSATNVSMVVSAGPLSGEKAAINILEINEKLRPQLAEKKQQFRNLKEKCFLTQLAGFLANQQNKYKYEECKDLIKSMLRNERQFKEEKLAEQLKQAEELRQYKVLVHAQERELTQLREKLREGRDASRSLNEHLQALLTPDEPDKSQGQDLQEQLAEGCRLAQHLVQKLSPENDNDDDEDVQVEVAEKVQKSSAPREMQKAEEKEVPEDSLEECAITCSNSHGPYDCNQPHRKTKITFEEDKVDSTLIGSSSHVEWEDAVHIIPENESDDEEEEEKGPVSPRNLQESEEEEVPQESWDEGYSTLSIPPEMLASYKSYSSTFHSLEEQQVCMAVDIGRHRWDQVKKEDHEATGPRLSRELLDEKGPEVLQDSLDRCYSTPSGCLELTDSCQPYRSAFYVLEQQRVGLAVDMDEIEKYQEVEEDQDPSCPRLSGELLDEKEPEVLQESLDRCYSTPSGCLELTDSCQPYRSAFYILEQQRVGLAVDMDEIEKYQEVEEDQDPSCPRLSGELLDEKEPEVLQESLDRCYSTPSGCLELTDSCQPYRSAFYILEQQRVGLAVDMDEIEKYQEVEEDQDPSCPRLSRELLDEKEPEVLQDSLGRCYSTPSGYLELPDLGQPYSSAVYSLEEQYLGLALDVDRIKKDQEEEEDQGPPCPRLSRELLEVVEPEVLQDSLDRCYSTPSSCLEQPDSCQPYGSSFYALEEKHVGFSLDVGEIEKKGKGKKRRGRRSKKERRRGRKEGEEDQNPPCPRLSRELLDEKGPEVLQDSLDRCYSTPSGCLELTDSCQPYRSAFYILEQQRVGLAVDMDEIEKYQEVEEDQDPSCPRLSRELLEVVEPEVLQDSLDRCYSTPSSCLEQPDSCQPYGSSFYALEEKHVGFSLDVGEIEKYQEVEEDQDPSCPRLSRELLDEKEPEVLQDSLGRCYSTPSGYLELPDLGQPYSSAVYSLEEQYLGLALDVDRIKKDQEEEEDQGPPCPRLSRELLEVVEPEVLQDSLDRCYSTPSSCLEQPDSCQPYGSSFYALEEKHVGFSLDVGEIEKKGKGKKRRGRRSKKERRRGRKEGEEDQNPPCPRLNSMLMEVEEPEVLQDSLDICYSTPSMYFELPDSFQHYRSVFYSFEEEHISFALYVDNRFFTLTVTSLHLVFQMGVIFPQ.

4 consecutive EGF-like domains span residues 24 to 63 (HALQ…EYCQ), 64 to 102 (HRDP…EDCQ), 105 to 143 (TPHP…KECQ), and 144 to 180 (WTDA…QKCE). 17 cysteine pairs are disulfide-bonded: C28-C41, C35-C51, C53-C62, C68-C79, C73-C90, C92-C101, C109-C121, C115-C131, C133-C142, C148-C159, C153-C168, C170-C179, C186-C198, C192-C207, C209-C218, C225-C236, and C230-C246. One can recognise an EGF-like 5; calcium-binding domain in the interval 182–219 (DVNECDIPGHCQHGGTCLNLPGSYQCQCLQGFTGQYCD). Residues 221 to 258 (LYVPCAHSPCVNGGTCRQTGDFTFECNCLPVPDSTSSA) enclose the EGF-like 6 domain. The stretch at 337–381 (RQFKEEKLAEQLKQAEELRQYKVLVHSQERELTQLKEKLREGRDA) forms a coiled coil. Disordered stretches follow at residues 423-463 (KLSP…KVPE), 713-734 (EKVQ…EVPE), and 782-828 (WEDA…EGYS). Residues 427–443 (ENDEDEDEDVQVEEDEK) show a composition bias toward acidic residues. 13 Olduvai domains span residues 427–521 (ENDE…NILP), 698–790 (ENDN…HIIP), 791–879 (ENES…ATGP), 882–937 (SREL…VDMD), 938–1029 (EIEK…PSCP), 1032–1104 (SGEL…PSCP), 1107–1162 (SREL…LDVD), 1163–1255 (RIKK…RSKK), 1256–1348 (ERRR…PSCP), 1351–1423 (SREL…PSCP), 1426–1481 (SREL…LDVD), 1482–1574 (RIKK…RSKK), and 1575–1673 (ERRR…IFPQ). A compositionally biased stretch (basic and acidic residues) spans 452 to 463 (EVQKTEESKVPE). Acidic residues-rich tracts occupy residues 792–801 (NESDDEEEEE) and 812–824 (ESEE…ESWD). A disordered region spans residues 1242–1280 (KGKGKKRRGRRSKKERRRGRKEGEEDQNPPCPRLSRELL). A compositionally biased stretch (basic residues) spans 1243–1261 (GKGKKRRGRRSKKERRRGR). Residues 1561–1594 (KGKGKKRRGRRSKKERRRGRKEGEEDQNPPCPRL) form a disordered region. Residues 1562 to 1580 (GKGKKRRGRRSKKERRRGR) are compositionally biased toward basic residues.

The protein belongs to the NBPF family.

It localises to the cytoplasm. This chain is NBPF family member NBPF26, found in Homo sapiens (Human).